Reading from the N-terminus, the 332-residue chain is Glycerol-3-phosphate dehydrogenase [NAD(P)+] (332 aa).

The NADPH site is built by Ser11, Phe12, Lys32, and Lys106. Positions 106, 137, and 139 each coordinate sn-glycerol 3-phosphate. Ala141 is an NADPH binding site. 5 residues coordinate sn-glycerol 3-phosphate: Lys192, Asp245, Ser255, Arg256, and Asn257. Lys192 functions as the Proton acceptor in the catalytic mechanism. Arg256 lines the NADPH pocket. Positions 280 and 282 each coordinate NADPH.

The protein belongs to the NAD-dependent glycerol-3-phosphate dehydrogenase family.

It is found in the cytoplasm. It carries out the reaction sn-glycerol 3-phosphate + NAD(+) = dihydroxyacetone phosphate + NADH + H(+). The catalysed reaction is sn-glycerol 3-phosphate + NADP(+) = dihydroxyacetone phosphate + NADPH + H(+). It functions in the pathway membrane lipid metabolism; glycerophospholipid metabolism. Its function is as follows. Catalyzes the reduction of the glycolytic intermediate dihydroxyacetone phosphate (DHAP) to sn-glycerol 3-phosphate (G3P), the key precursor for phospholipid synthesis. The polypeptide is Glycerol-3-phosphate dehydrogenase [NAD(P)+] (Staphylococcus aureus (strain bovine RF122 / ET3-1)).